A 223-amino-acid polypeptide reads, in one-letter code: Small ribosomal subunit protein uS3 (223 aa).

A KH type-2 domain is found at I39–A117.

Belongs to the universal ribosomal protein uS3 family. As to quaternary structure, part of the 30S ribosomal subunit. Forms a tight complex with proteins S10 and S14.

Functionally, binds the lower part of the 30S subunit head. Binds mRNA in the 70S ribosome, positioning it for translation. The sequence is that of Small ribosomal subunit protein uS3 from Chlamydia caviae (strain ATCC VR-813 / DSM 19441 / 03DC25 / GPIC) (Chlamydophila caviae).